A 167-amino-acid polypeptide reads, in one-letter code: Transmembrane protein 229B (167 aa).

Over 1-14 the chain is Cytoplasmic; that stretch reads MASAEPLTALSRWY. The chain crosses the membrane as a helical span at residues 15 to 35; it reads LYAIHGYFCEVMFTAAWEFVV. At 36-40 the chain is on the extracellular side; the sequence is NFNWK. A helical transmembrane segment spans residues 41–61; sequence FPGVTSVWALFIYGTSILIVE. Topologically, residues 62–73 are cytoplasmic; sequence RMYLRLRGRCPL. Residues 74–94 traverse the membrane as a helical segment; that stretch reads LVRCVIYTLWTYLWEFTTGFI. Residues 95-109 are Extracellular-facing; the sequence is LRQFNACPWDYSQFD. The chain crosses the membrane as a helical span at residues 110-130; the sequence is FDFMGLITLEYAVPWFCGALI. Residues 131 to 167 are Cytoplasmic-facing; the sequence is MEQFIIRNTLRLRFDKDAEPGEPASPPALANGHVKTD. The segment at 148-167 is disordered; sequence AEPGEPASPPALANGHVKTD.

Belongs to the TMEM229 family.

It is found in the membrane. The polypeptide is Transmembrane protein 229B (TMEM229B) (Mus musculus (Mouse)).